Here is a 487-residue protein sequence, read N- to C-terminus: Serine/threonine-protein kinase 4 (487 aa).

An N-acetylmethionine modification is found at methionine 1. Threonine 3 is subject to Phosphothreonine. In terms of domain architecture, Protein kinase spans 30–281 (FDVLEKLGEG…ATQLLQHPFV (252 aa)). Residues 36 to 44 (LGEGSYGSV) and lysine 59 contribute to the ATP site. Aspartate 149 serves as the catalytic Proton acceptor. Threonine 183 bears the Phosphothreonine; by autocatalysis mark. At serine 265 the chain carries Phosphoserine. Residues 290 to 310 (LRDLINEAMDVKLKRQESQQR) are a coiled coil. Residues 303–312 (KRQESQQREV) show a composition bias toward basic and acidic residues. The interval 303–332 (KRQESQQREVDQDDEENSEEDEMDSGTMVR) is disordered. Positions 313–326 (DQDDEENSEEDEMD) are enriched in acidic residues. Serine 320 carries the post-translational modification Phosphoserine. 2 positions are modified to phosphothreonine: threonine 340 and threonine 367. Threonine 387 is subject to Phosphothreonine; by PKB/AKT1. Phosphoserine is present on residues serine 410 and serine 414. At tyrosine 433 the chain carries Phosphotyrosine. In terms of domain architecture, SARAH spans 433–480 (YEFLKSWTVEDLQKRLLALDPMMEQEIEEIRQKYQSKRQPILDAIEAK).

It belongs to the protein kinase superfamily. STE Ser/Thr protein kinase family. STE20 subfamily. Homodimer; mediated via the coiled-coil region. Interacts with NORE1, which inhibits autoactivation. Interacts with and stabilizes SAV1. Interacts with RASSF1. Interacts with FOXO3. Interacts with RASSF2 (via SARAH domain). Interacts with AR, PKB/AKT1, TNNI3 and SIRT1. Interacts with DLG5 (via PDZ domain 3). Interacts with MARK3 and SCRIB in the presence of DLG5. Mg(2+) is required as a cofactor. In terms of processing, autophosphorylated on serine and threonine residues. Phosphorylation at Thr-387 by PKB/AKT1, leads to inhibition of its: kinase activity, nuclear translocation and autophosphorylation at Thr-183. It also diminishes its cleavage by caspases and its ability to phosphorylate FOXO3. Proteolytically cleaved by caspase-3 during apoptosis at Asp-326 and Asp-349 resulting in a 37 kDa or a 39 kDa subunit respectively. The 39 kDa subunit is further cleaved into the 37 kDa form. Proteolytic cleavage results in kinase activation and nuclear translocation of the truncated form (MST1/N). It is less likely that cleavage at Asp-349 is a prerequisite for activation as this site is not conserved in the murine ortholog.

Its subcellular location is the cytoplasm. The protein resides in the nucleus. The catalysed reaction is L-seryl-[protein] + ATP = O-phospho-L-seryl-[protein] + ADP + H(+). It catalyses the reaction L-threonyl-[protein] + ATP = O-phospho-L-threonyl-[protein] + ADP + H(+). With respect to regulation, inhibited by the C-terminal non-catalytic region. Activated by caspase-cleavage. Full activation also requires homodimerization and autophosphorylation of Thr-183. Activated by RASSF1 which acts by preventing its dephosphorylation. Functionally, stress-activated, pro-apoptotic kinase which, following caspase-cleavage, enters the nucleus and induces chromatin condensation followed by internucleosomal DNA fragmentation. Key component of the Hippo signaling pathway which plays a pivotal role in organ size control and tumor suppression by restricting proliferation and promoting apoptosis. The core of this pathway is composed of a kinase cascade wherein STK3/MST2 and STK4/MST1, in complex with its regulatory protein SAV1, phosphorylates and activates LATS1/2 in complex with its regulatory protein MOB1, which in turn phosphorylates and inactivates YAP1 oncoprotein and WWTR1/TAZ. Phosphorylation of YAP1 by LATS2 inhibits its translocation into the nucleus to regulate cellular genes important for cell proliferation, cell death, and cell migration. STK3/MST2 and STK4/MST1 are required to repress proliferation of mature hepatocytes, to prevent activation of facultative adult liver stem cells (oval cells), and to inhibit tumor formation. Phosphorylates 'Ser-14' of histone H2B (H2BS14ph) during apoptosis. Phosphorylates FOXO3 upon oxidative stress, which results in its nuclear translocation and cell death initiation. Phosphorylates MOBKL1A, MOBKL1B and RASSF2. Phosphorylates TNNI3 (cardiac Tn-I) and alters its binding affinity to TNNC1 (cardiac Tn-C) and TNNT2 (cardiac Tn-T). Phosphorylates FOXO1 on 'Ser-212' and regulates its activation and stimulates transcription of PMAIP1 in a FOXO1-dependent manner. Phosphorylates SIRT1 and inhibits SIRT1-mediated p53/TP53 deacetylation, thereby promoting p53/TP53 dependent transcription and apoptosis upon DNA damage. Acts as an inhibitor of PKB/AKT1. Phosphorylates AR on 'Ser-650' and suppresses its activity by intersecting with PKB/AKT1 signaling and antagonizing formation of AR-chromatin complexes. The polypeptide is Serine/threonine-protein kinase 4 (STK4) (Colobus guereza (Mantled guereza)).